A 147-amino-acid polypeptide reads, in one-letter code: Ribosome maturation factor RimP (147 aa).

The protein belongs to the RimP family.

The protein resides in the cytoplasm. Required for maturation of 30S ribosomal subunits. This chain is Ribosome maturation factor RimP, found in Sulfurihydrogenibium azorense (strain DSM 15241 / OCM 825 / Az-Fu1).